The primary structure comprises 667 residues: Alpha-1,4-glucan:maltose-1-phosphate maltosyltransferase (667 aa).

Alpha-maltose 1-phosphate contacts are provided by lysine 261, glutamine 321, and aspartate 356. The active-site Nucleophile is the aspartate 392. Asparagine 393 contacts alpha-maltose 1-phosphate. The Proton donor role is filled by glutamate 421. 534 to 535 (KY) contacts alpha-maltose 1-phosphate.

The protein belongs to the glycosyl hydrolase 13 family. GlgE subfamily. Homodimer.

It carries out the reaction alpha-maltose 1-phosphate + [(1-&gt;4)-alpha-D-glucosyl](n) = [(1-&gt;4)-alpha-D-glucosyl](n+2) + phosphate. Functionally, maltosyltransferase that uses maltose 1-phosphate (M1P) as the sugar donor to elongate linear or branched alpha-(1-&gt;4)-glucans. Is involved in a branched alpha-glucan biosynthetic pathway from trehalose, together with TreS, Mak and GlgB. This Methylacidiphilum infernorum (isolate V4) (Methylokorus infernorum (strain V4)) protein is Alpha-1,4-glucan:maltose-1-phosphate maltosyltransferase.